Reading from the N-terminus, the 339-residue chain is uncharacterized protein (339 aa).

NADP(+) contacts are provided by isoleucine 54, lysine 78, aspartate 101, asparagine 128, tyrosine 213, and lysine 217. The active-site Proton donor is the tyrosine 213. Residue lysine 217 is the Lowers pKa of active site Tyr of the active site.

The protein belongs to the short-chain dehydrogenases/reductases (SDR) family.

This is an uncharacterized protein from Schizosaccharomyces pombe (strain 972 / ATCC 24843) (Fission yeast).